A 697-amino-acid polypeptide reads, in one-letter code: Probable translocation protein y4yR (697 aa).

The next 8 helical transmembrane spans lie at 20 to 40 (VALMLLLAVSMMVMPIPVMAV), 42 to 62 (ALIGFNMGLAVLLLMAALYVS), 67 to 87 (FSSLPGVILLSTVFRLALTVA), 107 to 127 (SFVISGNIVVGFVIFLVVTMV), 200 to 220 (SIAGLVVICINMLGGISIGLL), 235 to 255 (LLTIGDALISQIPALLLSITA), 293 to 313 (VAMGFVPGFPLPVFFMLAAVF), and 372 to 392 (IARISQLVSADLGIIVPPIPV). The tract at residues 675 to 697 (IRLPPSNGTSGEPRSIRPSATTG) is disordered. Residues 680-697 (SNGTSGEPRSIRPSATTG) show a composition bias toward polar residues.

The protein belongs to the FHIPEP (flagella/HR/invasion proteins export pore) family.

The protein localises to the cell inner membrane. In terms of biological role, could be involved in the secretion of an unknown factor. The protein is Probable translocation protein y4yR of Sinorhizobium fredii (strain NBRC 101917 / NGR234).